A 224-amino-acid polypeptide reads, in one-letter code: Ribonuclease T (224 aa).

An Exonuclease domain is found at 32–206 (VVVDVETGGF…YDTEKTAELF (175 aa)). Residues Asp35, Glu37, His193, and Asp198 each contribute to the Mg(2+) site. The active-site Proton donor/acceptor is the His193.

This sequence belongs to the RNase T family. As to quaternary structure, homodimer. The cofactor is Mg(2+).

Trims short 3' overhangs of a variety of RNA species, leaving a one or two nucleotide 3' overhang. Responsible for the end-turnover of tRNA: specifically removes the terminal AMP residue from uncharged tRNA (tRNA-C-C-A). Also appears to be involved in tRNA biosynthesis. This Pseudomonas paraeruginosa (strain DSM 24068 / PA7) (Pseudomonas aeruginosa (strain PA7)) protein is Ribonuclease T.